We begin with the raw amino-acid sequence, 172 residues long: Protein-export protein SecB (172 aa).

The protein belongs to the SecB family. Homotetramer, a dimer of dimers. One homotetramer interacts with 1 SecA dimer.

Its subcellular location is the cytoplasm. One of the proteins required for the normal export of preproteins out of the cell cytoplasm. It is a molecular chaperone that binds to a subset of precursor proteins, maintaining them in a translocation-competent state. It also specifically binds to its receptor SecA. The polypeptide is Protein-export protein SecB (Maricaulis maris (strain MCS10) (Caulobacter maris)).